Consider the following 290-residue polypeptide: 4-hydroxy-tetrahydrodipicolinate synthase (290 aa).

T44 contributes to the pyruvate binding site. Y132 (proton donor/acceptor) is an active-site residue. The active-site Schiff-base intermediate with substrate is the K160. Pyruvate is bound at residue I202.

Belongs to the DapA family. Homotetramer; dimer of dimers.

The protein resides in the cytoplasm. The enzyme catalyses L-aspartate 4-semialdehyde + pyruvate = (2S,4S)-4-hydroxy-2,3,4,5-tetrahydrodipicolinate + H2O + H(+). The protein operates within amino-acid biosynthesis; L-lysine biosynthesis via DAP pathway; (S)-tetrahydrodipicolinate from L-aspartate: step 3/4. In terms of biological role, catalyzes the condensation of (S)-aspartate-beta-semialdehyde [(S)-ASA] and pyruvate to 4-hydroxy-tetrahydrodipicolinate (HTPA). The sequence is that of 4-hydroxy-tetrahydrodipicolinate synthase from Alkaliphilus oremlandii (strain OhILAs) (Clostridium oremlandii (strain OhILAs)).